The sequence spans 251 residues: Hydroxyacylglutathione hydrolase (251 aa).

His-53, His-55, Asp-57, His-58, His-110, Asp-127, and His-165 together coordinate Zn(2+).

Belongs to the metallo-beta-lactamase superfamily. Glyoxalase II family. Monomer. It depends on Zn(2+) as a cofactor.

The catalysed reaction is an S-(2-hydroxyacyl)glutathione + H2O = a 2-hydroxy carboxylate + glutathione + H(+). Its pathway is secondary metabolite metabolism; methylglyoxal degradation; (R)-lactate from methylglyoxal: step 2/2. Thiolesterase that catalyzes the hydrolysis of S-D-lactoyl-glutathione to form glutathione and D-lactic acid. The polypeptide is Hydroxyacylglutathione hydrolase (Cronobacter sakazakii (strain ATCC BAA-894) (Enterobacter sakazakii)).